The primary structure comprises 360 residues: Lipid-A-disaccharide synthase (360 aa).

This sequence belongs to the LpxB family.

It carries out the reaction a lipid X + a UDP-2-N,3-O-bis[(3R)-3-hydroxyacyl]-alpha-D-glucosamine = a lipid A disaccharide + UDP + H(+). The protein operates within bacterial outer membrane biogenesis; LPS lipid A biosynthesis. Its function is as follows. Condensation of UDP-2,3-diacylglucosamine and 2,3-diacylglucosamine-1-phosphate to form lipid A disaccharide, a precursor of lipid A, a phosphorylated glycolipid that anchors the lipopolysaccharide to the outer membrane of the cell. This chain is Lipid-A-disaccharide synthase, found in Helicobacter pylori (strain G27).